The following is a 397-amino-acid chain: MSKAKFERSKPHVNIGTIGHVDHGKTTLTAAITTVLAQAGGAEAFKYDEIDKAPEEKERGITINTAHVEYETANRHYAHVDCPGHADYVKNMITGAAQMDGAILVCSAADGPMPQTREHILLSSRVGVDHIVVFLNKADMVDDEELLELVEMEVRELLSEYNFPGDDIPVIKGSALVALENPTDEAATACIRELMDAVDSYIPTPERATDKPFLMPVEDVFTITGRGTVATGRVERGVLHVGDEVEVIGLTEERRKTVVTGIEMFRKLLDEAQAGDNIGALLRGIQRTDIERGQVLAQVGTINPHKKFVGQVYVLKKEEGGRHTPFFDGYRPQFYFRTTDVTGSIKLPEGMEMVMPGDHIDMEVELITEIAMDEGLRFAIREGGRTVGSGVVTSIIE.

Positions 10-206 constitute a tr-type G domain; sequence KPHVNIGTIG…AVDSYIPTPE (197 aa). A G1 region spans residues 19–26; the sequence is GHVDHGKT. Residue 19-26 coordinates GTP; that stretch reads GHVDHGKT. Position 26 (Thr-26) interacts with Mg(2+). The G2 stretch occupies residues 60–64; that stretch reads GITIN. The tract at residues 81–84 is G3; it reads DCPG. GTP is bound by residues 81–85 and 136–139; these read DCPGH and NKAD. The interval 136–139 is G4; the sequence is NKAD. The segment at 174 to 176 is G5; that stretch reads SAL.

The protein belongs to the TRAFAC class translation factor GTPase superfamily. Classic translation factor GTPase family. EF-Tu/EF-1A subfamily. Monomer.

It localises to the cytoplasm. The catalysed reaction is GTP + H2O = GDP + phosphate + H(+). Its function is as follows. GTP hydrolase that promotes the GTP-dependent binding of aminoacyl-tRNA to the A-site of ribosomes during protein biosynthesis. This chain is Elongation factor Tu, found in Clostridium perfringens (strain ATCC 13124 / DSM 756 / JCM 1290 / NCIMB 6125 / NCTC 8237 / Type A).